We begin with the raw amino-acid sequence, 348 residues long: D-alanine--D-alanine ligase (348 aa).

The region spanning 132-334 (KRVLESIGIP…YPDLIEELVT (203 aa)) is the ATP-grasp domain. ATP is bound at residue 162-217 (LARLTFPIFVKPANMGSSVGISKAQTKVELRKAIQLALTYDSRVLIEQGVVAREIE). Positions 288, 301, and 303 each coordinate Mg(2+).

This sequence belongs to the D-alanine--D-alanine ligase family. It depends on Mg(2+) as a cofactor. Mn(2+) serves as cofactor.

It is found in the cytoplasm. It carries out the reaction 2 D-alanine + ATP = D-alanyl-D-alanine + ADP + phosphate + H(+). It participates in cell wall biogenesis; peptidoglycan biosynthesis. Functionally, cell wall formation. The protein is D-alanine--D-alanine ligase of Streptococcus pyogenes serotype M6 (strain ATCC BAA-946 / MGAS10394).